A 681-amino-acid chain; its full sequence is Methionine--tRNA ligase (681 aa).

Positions 14-24 (PYANGSIHLGH) match the 'HIGH' region motif. Residues Cys-145, Cys-148, Cys-158, and Cys-161 each coordinate Zn(2+). Residues 331-335 (KMSKS) carry the 'KMSKS' region motif. Lys-334 contributes to the ATP binding site. In terms of domain architecture, tRNA-binding spans 579–681 (AFAAIDLRVA…SGAKPGQRIK (103 aa)).

The protein belongs to the class-I aminoacyl-tRNA synthetase family. MetG type 1 subfamily. In terms of assembly, homodimer. The cofactor is Zn(2+).

The protein localises to the cytoplasm. The catalysed reaction is tRNA(Met) + L-methionine + ATP = L-methionyl-tRNA(Met) + AMP + diphosphate. Is required not only for elongation of protein synthesis but also for the initiation of all mRNA translation through initiator tRNA(fMet) aminoacylation. This is Methionine--tRNA ligase from Pseudomonas fluorescens (strain ATCC BAA-477 / NRRL B-23932 / Pf-5).